We begin with the raw amino-acid sequence, 401 residues long: MHPHISKLYNSALKPSRLIIGLMSGTSLDGLDVALCKITAAGVHTQIEVLKFTTVDYSDDYKTKIKQVFAKRECNLEYLTLLHPWVGKFHGDMVNQCLNSWQVNPANIDVIASHGQTIYHCPKSQHQYNDFNNGTLQIGDSDQIAVTTGITTIGDFRQKHIAAGGEGAPLAVYGDYLFFSSSDENRILLNMGGIANLTFLPQNGDSNAVFSSDIGPCNTIMDAYVQRYFNNMHYDENAAIAKAGFINTALLTALCDNHFLTLKMPKTTGPEVFNLAYLEAAQQASNTQKLSHQDVMATLNRFTAEVIANALNTCVKMAPNSVVYASGGGIHNLLLMQHLVTLCPAIKGFKNTHALGVDPDAKEAVLFAILANECLAGEQLHLDNKAQGIAGVTMGKVSFAD.

Residue 25–32 (GTSLDGLD) participates in ATP binding.

Belongs to the anhydro-N-acetylmuramic acid kinase family.

It carries out the reaction 1,6-anhydro-N-acetyl-beta-muramate + ATP + H2O = N-acetyl-D-muramate 6-phosphate + ADP + H(+). It participates in amino-sugar metabolism; 1,6-anhydro-N-acetylmuramate degradation. Its pathway is cell wall biogenesis; peptidoglycan recycling. In terms of biological role, catalyzes the specific phosphorylation of 1,6-anhydro-N-acetylmuramic acid (anhMurNAc) with the simultaneous cleavage of the 1,6-anhydro ring, generating MurNAc-6-P. Is required for the utilization of anhMurNAc either imported from the medium or derived from its own cell wall murein, and thus plays a role in cell wall recycling. The protein is Anhydro-N-acetylmuramic acid kinase of Pseudoalteromonas translucida (strain TAC 125).